A 360-amino-acid polypeptide reads, in one-letter code: Alpha-2-macroglobulin receptor-associated protein (360 aa).

A signal peptide spans 1-33; it reads MAPLRDRVSTLPRLQLLVLLLLPLLLVPQPIAG. S53 and S138 each carry phosphoserine. The stretch at 222–302 forms a coiled coil; it reads SKHSELKDRL…KHNHYQKQLE (81 aa). The LDL receptor binding stretch occupies residues 240-356; sequence RLRKVSHQGY…DLSSRVSRAR (117 aa). N271 is a glycosylation site (N-linked (GlcNAc...) asparagine). Positions 357 to 360 match the Prevents secretion from ER motif; it reads HNEL.

Belongs to the alpha-2-MRAP family. Interacts with the LRP1/alpha-2-macroglobulin receptor heavy and light chains; the interaction is transient and coincides with a reduction of ligand binding by the receptor. Interacts with LRP2/glycoprotein 330. Interacts with LRP1B; binding is followed by internalization and degradation. Interacts with LDLR. Interacts with SORL1. Interacts with LRP1; this interaction is followed by rapid internalization. In terms of processing, N-glycosylated.

Its subcellular location is the rough endoplasmic reticulum lumen. The protein resides in the endoplasmic reticulum-Golgi intermediate compartment lumen. It localises to the golgi apparatus. It is found in the cis-Golgi network. The protein localises to the golgi apparatus lumen. Its subcellular location is the endosome lumen. The protein resides in the cell surface. Molecular chaperone for LDL receptor-related proteins that may regulate their ligand binding activity along the secretory pathway. The polypeptide is Alpha-2-macroglobulin receptor-associated protein (Lrpap1) (Rattus norvegicus (Rat)).